The following is a 185-amino-acid chain: Thymidine kinase (185 aa).

ATP is bound by residues 7 to 14 (GPMFAGKT) and 83 to 86 (DEIQ). Glutamate 84 acts as the Proton acceptor in catalysis. 4 residues coordinate Zn(2+): cysteine 139, cysteine 142, cysteine 177, and histidine 180.

It belongs to the thymidine kinase family. In terms of assembly, homotetramer.

The protein resides in the cytoplasm. The catalysed reaction is thymidine + ATP = dTMP + ADP + H(+). The polypeptide is Thymidine kinase (Pyrobaculum aerophilum (strain ATCC 51768 / DSM 7523 / JCM 9630 / CIP 104966 / NBRC 100827 / IM2)).